A 297-amino-acid chain; its full sequence is Aspartate carbamoyltransferase catalytic subunit (297 aa).

Residues Arg51 and Thr52 each contribute to the carbamoyl phosphate site. Position 79 (Lys79) interacts with L-aspartate. Residues Arg101, His129, and Gln132 each contribute to the carbamoyl phosphate site. Arg162 and Arg216 together coordinate L-aspartate. Residues Gly257 and Pro258 each contribute to the carbamoyl phosphate site.

Belongs to the aspartate/ornithine carbamoyltransferase superfamily. ATCase family. Heterododecamer (2C3:3R2) of six catalytic PyrB chains organized as two trimers (C3), and six regulatory PyrI chains organized as three dimers (R2).

It catalyses the reaction carbamoyl phosphate + L-aspartate = N-carbamoyl-L-aspartate + phosphate + H(+). It functions in the pathway pyrimidine metabolism; UMP biosynthesis via de novo pathway; (S)-dihydroorotate from bicarbonate: step 2/3. In terms of biological role, catalyzes the condensation of carbamoyl phosphate and aspartate to form carbamoyl aspartate and inorganic phosphate, the committed step in the de novo pyrimidine nucleotide biosynthesis pathway. This Myxococcus xanthus (strain DK1622) protein is Aspartate carbamoyltransferase catalytic subunit.